The primary structure comprises 155 residues: 6,7-dimethyl-8-ribityllumazine synthase (155 aa).

Residues phenylalanine 18, alanine 49 to glutamate 51, and cysteine 75 to isoleucine 77 each bind 5-amino-6-(D-ribitylamino)uracil. Position 80-81 (glutamate 80–threonine 81) interacts with (2S)-2-hydroxy-3-oxobutyl phosphate. Residue histidine 83 is the Proton donor of the active site. Asparagine 108 is a binding site for 5-amino-6-(D-ribitylamino)uracil. Arginine 122 lines the (2S)-2-hydroxy-3-oxobutyl phosphate pocket.

Belongs to the DMRL synthase family.

The enzyme catalyses (2S)-2-hydroxy-3-oxobutyl phosphate + 5-amino-6-(D-ribitylamino)uracil = 6,7-dimethyl-8-(1-D-ribityl)lumazine + phosphate + 2 H2O + H(+). It participates in cofactor biosynthesis; riboflavin biosynthesis; riboflavin from 2-hydroxy-3-oxobutyl phosphate and 5-amino-6-(D-ribitylamino)uracil: step 1/2. Catalyzes the formation of 6,7-dimethyl-8-ribityllumazine by condensation of 5-amino-6-(D-ribitylamino)uracil with 3,4-dihydroxy-2-butanone 4-phosphate. This is the penultimate step in the biosynthesis of riboflavin. This is 6,7-dimethyl-8-ribityllumazine synthase from Bartonella henselae (strain ATCC 49882 / DSM 28221 / CCUG 30454 / Houston 1) (Rochalimaea henselae).